A 305-amino-acid chain; its full sequence is NADH-cytochrome b5 reductase 1 (305 aa).

The chain crosses the membrane as a helical span at residues 8–28; it reads VLLASLGVGLFTLFGLALGTY. In terms of domain architecture, FAD-binding FR-type spans 44–156; it reads DEKYLLRLLD…RGPSGLLSYA (113 aa). FAD-binding positions include 136–166 and 175–210; these read DSLK…IQPN and VAKK…QCFL.

This sequence belongs to the flavoprotein pyridine nucleotide cytochrome reductase family. FAD is required as a cofactor.

It is found in the membrane. It carries out the reaction 2 Fe(III)-[cytochrome b5] + NADH = 2 Fe(II)-[cytochrome b5] + NAD(+) + H(+). NADH-cytochrome b5 reductases are involved in desaturation and elongation of fatty acids, cholesterol biosynthesis, drug metabolism, and, in erythrocyte, methemoglobin reduction. This is NADH-cytochrome b5 reductase 1 (Cyb5r1) from Rattus norvegicus (Rat).